The following is a 367-amino-acid chain: 7,8-didemethyl-8-hydroxy-5-deazariboflavin synthase (367 aa).

The 237-residue stretch at 39 to 275 (LTFARNVFVP…AEVGVQVPPN (237 aa)) folds into the Radical SAM core domain. [4Fe-4S] cluster is bound by residues Cys53, Cys57, and Cys60.

This sequence belongs to the radical SAM superfamily. CofG family. In terms of assembly, consists of two subunits, CofG and CofH. The cofactor is [4Fe-4S] cluster.

The enzyme catalyses 5-amino-5-(4-hydroxybenzyl)-6-(D-ribitylimino)-5,6-dihydrouracil + S-adenosyl-L-methionine = 7,8-didemethyl-8-hydroxy-5-deazariboflavin + 5'-deoxyadenosine + L-methionine + NH4(+) + H(+). The protein operates within cofactor biosynthesis; coenzyme F0 biosynthesis. Its function is as follows. Catalyzes the radical-mediated synthesis of 7,8-didemethyl-8-hydroxy-5-deazariboflavin from 5-amino-5-(4-hydroxybenzyl)-6-(D-ribitylimino)-5,6-dihydrouracil. The sequence is that of 7,8-didemethyl-8-hydroxy-5-deazariboflavin synthase from Halobacterium salinarum (strain ATCC 29341 / DSM 671 / R1).